The primary structure comprises 173 residues: Transcriptional repressor NrdR (173 aa).

Residues 3–34 (CPFCQHADTRVIDSRVSEDGATIRRRRECEAC) fold into a zinc finger. The ATP-cone domain maps to 49-139 (PAIVKSDGTR…VYRSFEDVAD (91 aa)).

The protein belongs to the NrdR family. The cofactor is Zn(2+).

In terms of biological role, negatively regulates transcription of bacterial ribonucleotide reductase nrd genes and operons by binding to NrdR-boxes. This chain is Transcriptional repressor NrdR, found in Stenotrophomonas maltophilia (strain R551-3).